The following is a 118-amino-acid chain: Co-chaperonin GroES (118 aa).

Belongs to the GroES chaperonin family. Heptamer of 7 subunits arranged in a ring. Interacts with the chaperonin GroEL.

Its subcellular location is the cytoplasm. Together with the chaperonin GroEL, plays an essential role in assisting protein folding. The GroEL-GroES system forms a nano-cage that allows encapsulation of the non-native substrate proteins and provides a physical environment optimized to promote and accelerate protein folding. GroES binds to the apical surface of the GroEL ring, thereby capping the opening of the GroEL channel. The protein is Co-chaperonin GroES of Helicobacter pylori (strain G27).